A 671-amino-acid chain; its full sequence is Probable potassium transport system protein Kup (671 aa).

The disordered stretch occupies residues Met1 to His43. Low complexity predominate over residues Pro10–Gly37. The next 12 helical transmembrane spans lie at Leu52–Leu72, Val92–Met112, Leu147–Ile167, Pro181–Phe201, Val209–Val229, Gly255–Leu275, Trp291–Leu311, Leu323–Val343, Ile381–Phe401, Leu407–His427, Ala441–Val461, and Asp465–Lys485.

Belongs to the HAK/KUP transporter (TC 2.A.72) family.

Its subcellular location is the cell inner membrane. It carries out the reaction K(+)(in) + H(+)(in) = K(+)(out) + H(+)(out). Its function is as follows. Transport of potassium into the cell. Likely operates as a K(+):H(+) symporter. This is Probable potassium transport system protein Kup from Anaeromyxobacter dehalogenans (strain 2CP-1 / ATCC BAA-258).